The sequence spans 140 residues: ATP synthase epsilon chain (140 aa).

This sequence belongs to the ATPase epsilon chain family. As to quaternary structure, F-type ATPases have 2 components, CF(1) - the catalytic core - and CF(0) - the membrane proton channel. CF(1) has five subunits: alpha(3), beta(3), gamma(1), delta(1), epsilon(1). CF(0) has three main subunits: a, b and c.

It localises to the cell inner membrane. Its function is as follows. Produces ATP from ADP in the presence of a proton gradient across the membrane. This chain is ATP synthase epsilon chain, found in Xanthomonas campestris pv. campestris (strain 8004).